A 238-amino-acid chain; its full sequence is Tabinhibitin 5 (238 aa).

Residues 1–23 (MTSILVSRFLLAALVLQYATIDA) form the signal peptide. A Cell attachment site motif is present at residues 32–34 (RGD). The SCP domain occupies 67–211 (LSKINDVRDH…KARALLTCNF (145 aa)).

It belongs to the CRISP family. In terms of tissue distribution, expressed in salivary glands.

It localises to the secreted. Inhibits platelet aggregation induced by all agonists tested (ADP, arachidonic acid, the thromboxane A2 analog U46619, thrombin, and snake venom snaclecs (TMVA that activates platelet through GPIB, and stejnulxin that specifically acts through GPVI (GP6))). May act by competing with fibrinogen for binding to glycoprotein IIb/IIIa (ITGA2B/ITGB3). The protein is Tabinhibitin 5 of Tabanus yao (Horsefly).